A 369-amino-acid polypeptide reads, in one-letter code: Zeaxanthin 7,8(7',8')-cleavage dioxygenase, chromoplastic (369 aa).

The Fe cation site is built by His62, His112, His177, and His356.

The protein belongs to the carotenoid oxygenase family. Fe(2+) is required as a cofactor. In the style branches.

Its subcellular location is the plastid. The protein localises to the chromoplast. The enzyme catalyses all-trans-zeaxanthin + 2 O2 = crocetin dialdehyde + 2 3beta-hydroxy-beta-cyclocitral. Functionally, cleaves zeaxanthin symmetrically at the 7-8 and 7'-8' double bonds to produce crocetin dialdehyde and hydroxy-beta-cyclocitral, two water-soluble precursors sequestred in vacuoles and involved in the synthesis of saffron pigment and aroma. This is Zeaxanthin 7,8(7',8')-cleavage dioxygenase, chromoplastic (ZCD) from Crocus sativus (Saffron).